Reading from the N-terminus, the 138-residue chain is Putative pre-16S rRNA nuclease (138 aa).

The protein belongs to the YqgF nuclease family.

Its subcellular location is the cytoplasm. Could be a nuclease involved in processing of the 5'-end of pre-16S rRNA. The protein is Putative pre-16S rRNA nuclease of Citrobacter koseri (strain ATCC BAA-895 / CDC 4225-83 / SGSC4696).